The following is a 560-amino-acid chain: Cytosolic purine 5'-nucleotidase (560 aa).

The active-site Nucleophile is the D52. IMP contacts are provided by D52 and D54. D52 and D54 together coordinate Mg(2+). D54 serves as the catalytic Proton donor. ATP is bound by residues R144 and N154. IMP contacts are provided by R202, D206, K215, T249, N250, S251, and K292. Position 351 (D351) interacts with Mg(2+). S418 carries the post-translational modification Phosphoserine. 2 residues coordinate ATP: Q453 and R456. Residues S502, S511, and S527 each carry the phosphoserine modification. A disordered region spans residues 541–560 (PQEITHCHDEDDDEEEEEEE). The required for tetramer assembly stretch occupies residues 548 to 560 (HDEDDDEEEEEEE). A compositionally biased stretch (acidic residues) spans 550–560 (EDDDEEEEEEE).

This sequence belongs to the 5'(3')-deoxyribonucleotidase family. Homotetramer. The cofactor is Mg(2+).

It localises to the cytoplasm. The protein localises to the cytosol. It catalyses the reaction a ribonucleoside 5'-phosphate + H2O = a ribonucleoside + phosphate. It carries out the reaction a 2'-deoxyribonucleoside + a ribonucleoside 5'-phosphate = a ribonucleoside + a 2'-deoxyribonucleoside 5'-phosphate. The catalysed reaction is IMP + H2O = inosine + phosphate. The enzyme catalyses GMP + H2O = guanosine + phosphate. It catalyses the reaction dIMP + H2O = 2'-deoxyinosine + phosphate. It carries out the reaction dGMP + H2O = 2'-deoxyguanosine + phosphate. The catalysed reaction is XMP + H2O = xanthosine + phosphate. The enzyme catalyses inosine + GMP = guanosine + IMP. It catalyses the reaction dGMP + inosine = 2'-deoxyguanosine + IMP. It carries out the reaction dIMP + inosine = 2'-deoxyinosine + IMP. The catalysed reaction is inosine + UMP = uridine + IMP. The enzyme catalyses inosine + CMP = cytidine + IMP. It catalyses the reaction inosine + AMP = IMP + adenosine. Allosterically activated by various compounds including ATP, 2,3-BPG/2,3-Bisphosphoglyceric acid and Ap4A/P1,P4-bis(5'-adenosyl) tetraphosphate. Binding of an allosteric activator is a prerequisiste to magnesium and substrate binding. Inhibited by inorganic phosphate. Functionally, broad specificity cytosolic 5'-nucleotidase that catalyzes the dephosphorylation of 6-hydroxypurine nucleoside 5'-monophosphates. In addition, possesses a phosphotransferase activity by which it can transfer a phosphate from a donor nucleoside monophosphate to an acceptor nucleoside, preferably inosine, deoxyinosine and guanosine. Has the highest activities for IMP and GMP followed by dIMP, dGMP and XMP. Could also catalyze the transfer of phosphates from pyrimidine monophosphates but with lower efficiency. Through these activities regulates the purine nucleoside/nucleotide pools within the cell. The polypeptide is Cytosolic purine 5'-nucleotidase (Bos taurus (Bovine)).